A 327-amino-acid polypeptide reads, in one-letter code: MMVFLVSFISVEMKSMHCAPLFRQLVFSRSLHYSKTIFHNGRGLTSTSESEMSHFNALASSWWDVNGPQRILHKMNLLRMDFIHDTIRKNLKLNENTDDEVYIPPFSVDLLPQGIKNKIDEDQEMRRDEILNDSSLTVLDVGCGGGILSESMARLSFVSSVKGIDLSADVLEAAKLHKQKDPMLKDKLSYTLNAIEDIPETERFDIVTMFEVLEHVDYPSRVLLEGLKRLESGGWLFLSTINRDFVSWFTTIFMGEHVLRIVPVGTHTLEKYINQSEIKDWLQEDSNRKSEFRVADTKGCVYLPAYGWKFTSCPDVGNYFMAIQRVK.

The S-adenosyl-L-methionine site is built by R79, G142, D165, and F210. Mg(2+) is bound by residues E211, E214, and H215.

This sequence belongs to the class I-like SAM-binding methyltransferase superfamily. UbiG/COQ3 family. Component of a multi-subunit COQ enzyme complex, composed of at least COQ3, COQ4, COQ5, COQ6, COQ7 and COQ9. Mg(2+) is required as a cofactor.

The protein resides in the mitochondrion inner membrane. The enzyme catalyses a 3,4-dihydroxy-5-(all-trans-polyprenyl)benzoate + S-adenosyl-L-methionine = a 4-hydroxy-3-methoxy-5-(all-trans-polyprenyl)benzoate + S-adenosyl-L-homocysteine + H(+). The catalysed reaction is a 3-demethylubiquinone + S-adenosyl-L-methionine = a ubiquinone + S-adenosyl-L-homocysteine. It carries out the reaction a 3-demethylubiquinol + S-adenosyl-L-methionine = a ubiquinol + S-adenosyl-L-homocysteine + H(+). The protein operates within cofactor biosynthesis; ubiquinone biosynthesis. In terms of biological role, O-methyltransferase required for two non-consecutive steps during ubiquinone biosynthesis. Catalyzes the 2 O-methylation of 3,4-dihydroxy-5-(all-trans-polyprenyl)benzoic acid into 4-hydroxy-3-methoxy-5-(all-trans-polyprenyl)benzoic acid. Also catalyzes the last step of ubiquinone biosynthesis by mediating methylation of 3-demethylubiquinone into ubiquinone. Also able to mediate the methylation of 3-demethylubiquinol into ubiquinol. The chain is Ubiquinone biosynthesis O-methyltransferase, mitochondrial from Candida albicans (Yeast).